The sequence spans 414 residues: Putative competence-damage inducible protein (414 aa).

Belongs to the CinA family.

In Listeria monocytogenes serotype 4a (strain HCC23), this protein is Putative competence-damage inducible protein.